Here is a 148-residue protein sequence, read N- to C-terminus: Large ribosomal subunit protein uL15 (148 aa).

Positions 1-30 (MPSRLRKTRKLRGHVSHGHGRIGKHRKHPG) are enriched in basic residues. The disordered stretch occupies residues 1–37 (MPSRLRKTRKLRGHVSHGHGRIGKHRKHPGGRGNAGG). H39 bears the (3S)-3-hydroxyhistidine mark. K47 and K55 each carry N6-acetyllysine. S68 bears the Phosphoserine mark. K110 carries the N6-acetyllysine modification.

This sequence belongs to the universal ribosomal protein uL15 family. In terms of assembly, component of the large ribosomal subunit. Hydroxylated on His-39 by MINA.

It is found in the cytoplasm. In terms of biological role, component of the large ribosomal subunit. The ribosome is a large ribonucleoprotein complex responsible for the synthesis of proteins in the cell. The polypeptide is Large ribosomal subunit protein uL15 (Rpl27a) (Mus musculus (Mouse)).